The sequence spans 54 residues: Protein GndA (54 aa).

Residues Leu-28–Val-50 traverse the membrane as a helical segment.

The protein resides in the cell inner membrane. The protein is Protein GndA of Escherichia coli (strain K12).